We begin with the raw amino-acid sequence, 314 residues long: PDCD10 and GCKIII kinases-associated protein 1 (314 aa).

At Ser-30 the chain carries Phosphoserine. Positions 36–142 (DDTDKLKGKW…TQPFLEGGGT (107 aa)) are disordered. Thr-106 is subject to Phosphothreonine. Polar residues predominate over residues 107–116 (PQPTGNSSPT). Phosphoserine occurs at positions 238 and 241. Residues 267 to 291 (VDSGNRQEDTHGSDGDGDGEIVDED) are disordered. Residues 271-280 (NRQEDTHGSD) are compositionally biased toward basic and acidic residues. Residues 281–291 (GDGDGEIVDED) show a composition bias toward acidic residues.

Interacts with KEAP1; this interaction prevents the ubiquitination of KEAP1 by TRIM25, thus protecting KEAP1 from degradation. Found in association with PDCD10 and members of the STE20 kinases, such as STK24, STK25 and STK26.

The protein localises to the cell membrane. In terms of biological role, acts as a tumor suppressor. Acts as a tumor suppressor for colorectal cancer cell proliferation by targeting KEAP1/USP17/ELK1/CDK6 axis. This is PDCD10 and GCKIII kinases-associated protein 1 from Homo sapiens (Human).